The primary structure comprises 201 residues: Glycerol-3-phosphate acyltransferase (201 aa).

5 helical membrane passes run 10 to 30 (MLIGALIFGYVLGSIPFGLIL), 60 to 80 (LAAATLILDALKGTAAALIAA), 86 to 106 (AAIAAGFGAFIGHLFPVWIGF), 116 to 136 (LGVLIGLAWAGALVFAAAWIV), and 166 to 186 (ALAALFAIMTVIVFIKHRANI).

It belongs to the PlsY family. Probably interacts with PlsX.

It is found in the cell inner membrane. It carries out the reaction an acyl phosphate + sn-glycerol 3-phosphate = a 1-acyl-sn-glycero-3-phosphate + phosphate. It participates in lipid metabolism; phospholipid metabolism. Its function is as follows. Catalyzes the transfer of an acyl group from acyl-phosphate (acyl-PO(4)) to glycerol-3-phosphate (G3P) to form lysophosphatidic acid (LPA). This enzyme utilizes acyl-phosphate as fatty acyl donor, but not acyl-CoA or acyl-ACP. This Brucella canis (strain ATCC 23365 / NCTC 10854 / RM-666) protein is Glycerol-3-phosphate acyltransferase.